The chain runs to 405 residues: Pleckstrin homology-like domain family A member 1 (405 aa).

Basic and acidic residues-rich tracts occupy residues 1 to 11 (MRRTPAAERLS) and 54 to 63 (RSPEDGREQP). 3 disordered regions span residues 1-67 (MRRT…AHGS), 189-217 (QLQQ…VASL), and 293-405 (QQHL…SNSA). In terms of domain architecture, PH spans 153-277 (ALKEGVLEKR…AEITLQMVQY (125 aa)). Low complexity predominate over residues 189–202 (QLQQQQQQQQPGQG). A compositionally biased stretch (polar residues) spans 204-213 (AEPSQPSGPT). The segment covering 294 to 309 (QHLVQQQPPQTQQIQP) has biased composition (low complexity). Residues 309-344 (PQPQPQIQPQPQPQIQPQPQPQPQPQPQPQPQPQPQ) form a 16 X 2 AA repeats of P-Q region. The segment covering 310 to 342 (QPQPQIQPQPQPQIQPQPQPQPQPQPQPQPQPQ) has biased composition (pro residues). Basic residues predominate over residues 350 to 376 (PHPHPHPYSHPHQHPHPHPHPHPHPHP). Residues 354–377 (PHPYSHPHQHPHPHPHPHPHPHPH) form an 11 X 2 AA repeats of P-H region. A compositionally biased stretch (low complexity) spans 378 to 389 (PYQLQHAHQPLH).

As to quaternary structure, interacts with RPL14, EIF3S7 and PABPC4. As to expression, widely expressed with very high levels in adult liver and high levels in adult lung. According to PubMed:10428057 expressed at low levels in liver. Expressed at increased levels in atherosclerotic lesions observed in hyperhomocysteinema.

Its subcellular location is the cytoplasm. It localises to the cytoplasmic vesicle. The protein localises to the nucleus. It is found in the nucleolus. Seems to be involved in regulation of apoptosis. May be involved in detachment-mediated programmed cell death. May mediate apoptosis during neuronal development. May be involved in regulation of anti-apoptotic effects of IGF1. Required for TCR-induced apoptosis and expression of TNFRSF6/FAS in a T-cell hybridoma cell line. May be involved in translational regulation. In Mus musculus (Mouse), this protein is Pleckstrin homology-like domain family A member 1 (Phlda1).